The sequence spans 342 residues: S-adenosylmethionine:tRNA ribosyltransferase-isomerase (342 aa).

It belongs to the QueA family. In terms of assembly, monomer.

The protein localises to the cytoplasm. The catalysed reaction is 7-aminomethyl-7-carbaguanosine(34) in tRNA + S-adenosyl-L-methionine = epoxyqueuosine(34) in tRNA + adenine + L-methionine + 2 H(+). Its pathway is tRNA modification; tRNA-queuosine biosynthesis. Functionally, transfers and isomerizes the ribose moiety from AdoMet to the 7-aminomethyl group of 7-deazaguanine (preQ1-tRNA) to give epoxyqueuosine (oQ-tRNA). This is S-adenosylmethionine:tRNA ribosyltransferase-isomerase from Streptococcus pneumoniae (strain Hungary19A-6).